The following is a 193-amino-acid chain: CD70 antigen (193 aa).

Residues 1–17 (MPEEGSGCSVRRRPYGC) lie on the Cytoplasmic side of the membrane. Residues 18–38 (VLRAALVPLVAGLVICLVVCI) traverse the membrane as a helical; Signal-anchor for type II membrane protein segment. The Extracellular segment spans residues 39–193 (QRFAQAQQQL…TFFGVQWVRP (155 aa)). One can recognise a THD domain in the interval 56 to 191 (DVAELQLNHT…DETFFGVQWV (136 aa)). Asparagine 63 carries N-linked (GlcNAc...) asparagine glycosylation. 2 disulfide bridges follow: cysteine 115–cysteine 151 and cysteine 133–cysteine 168. N-linked (GlcNAc...) asparagine glycosylation occurs at asparagine 170.

Belongs to the tumor necrosis factor family. As to quaternary structure, homotrimer. In terms of processing, N-glycosylated.

The protein resides in the cell membrane. Its function is as follows. Expressed at the plasma membrane of B cells, it is the ligand of the CD27 receptor which is specifically expressed at the surface of T cells. The CD70-CD27 signaling pathway mediates antigen-specific T cell activation and expansion which in turn provides immune surveillance of B cells. The chain is CD70 antigen from Homo sapiens (Human).